Consider the following 264-residue polypeptide: tRNA pseudouridine synthase A (264 aa).

Residue aspartate 56 is the Nucleophile of the active site. Tyrosine 114 serves as a coordination point for substrate.

This sequence belongs to the tRNA pseudouridine synthase TruA family. Homodimer.

It carries out the reaction uridine(38/39/40) in tRNA = pseudouridine(38/39/40) in tRNA. Its function is as follows. Formation of pseudouridine at positions 38, 39 and 40 in the anticodon stem and loop of transfer RNAs. The chain is tRNA pseudouridine synthase A from Buchnera aphidicola subsp. Baizongia pistaciae (strain Bp).